Here is a 398-residue protein sequence, read N- to C-terminus: Candidapepsin-3 (398 aa).

The signal sequence occupies residues 1–18; sequence MFLKNIFIALAIALLADA. Positions 19–58 are cleaved as a propeptide — activation peptide; it reads TPTTSNNSPGFVALNFDVIKTHKNVTGPQGEINTNVNVKR. Residue Asn-42 is glycosylated (N-linked (GlcNAc...) asparagine). The 313-residue stretch at 72–384 folds into the Peptidase A1 domain; that stretch reads YASDITVGSN…DLDDNEISLA (313 aa). The active site involves Asp-90. 90–92 is a binding site for pepstatin A; that stretch reads DTG. Positions 103-112 are enriched in polar residues; that stretch reads VSCQAGQGQD. Positions 103–139 are disordered; the sequence is VSCQAGQGQDPNFCKNEGTYSPSSSSSSQNLNSPFSI. Cys-105 and Cys-116 form a disulfide bridge. The span at 123–138 shows a compositional bias: low complexity; the sequence is SPSSSSSSQNLNSPFS. Pepstatin A-binding positions include 140–143 and 274–278; these read EYGD and DSGTT. Asp-274 is a catalytic residue. An intrachain disulfide couples Cys-312 to Cys-350. N-linked (GlcNAc...) asparagine glycosylation occurs at Asn-313.

This sequence belongs to the peptidase A1 family. In terms of processing, O-glycosylated.

The protein localises to the secreted. It catalyses the reaction Preferential cleavage at the carboxyl of hydrophobic amino acids, but fails to cleave 15-Leu-|-Tyr-16, 16-Tyr-|-Leu-17 and 24-Phe-|-Phe-25 of insulin B chain. Activates trypsinogen, and degrades keratin.. This Candida albicans (strain WO-1) (Yeast) protein is Candidapepsin-3 (SAP3).